A 283-amino-acid chain; its full sequence is uncharacterized protein (283 aa).

The 77-residue stretch at 3-79 folds into the HTH rpiR-type domain; that stretch reads TGGLAIIQSM…MRVAGDLAKP (77 aa). Positions 39-58 form a DNA-binding region, H-T-H motif; it reads VNEISALANSSDAAVIRLCK. The region spanning 123–264 is the SIS domain; it reads AVSLLLKAHT…FLGMAAEQYE (142 aa).

This is an uncharacterized protein from Bacillus subtilis (strain 168).